Reading from the N-terminus, the 156-residue chain is 6,7-dimethyl-8-ribityllumazine synthase (156 aa).

5-amino-6-(D-ribitylamino)uracil-binding positions include F22, 57 to 59 (AYE), and 81 to 83 (TVI). (2S)-2-hydroxy-3-oxobutyl phosphate is bound at residue 86–87 (GT). H89 acts as the Proton donor in catalysis. F114 provides a ligand contact to 5-amino-6-(D-ribitylamino)uracil. R128 lines the (2S)-2-hydroxy-3-oxobutyl phosphate pocket.

Belongs to the DMRL synthase family. In terms of assembly, forms an icosahedral capsid composed of 60 subunits, arranged as a dodecamer of pentamers.

The catalysed reaction is (2S)-2-hydroxy-3-oxobutyl phosphate + 5-amino-6-(D-ribitylamino)uracil = 6,7-dimethyl-8-(1-D-ribityl)lumazine + phosphate + 2 H2O + H(+). Its pathway is cofactor biosynthesis; riboflavin biosynthesis; riboflavin from 2-hydroxy-3-oxobutyl phosphate and 5-amino-6-(D-ribitylamino)uracil: step 1/2. Its function is as follows. Catalyzes the formation of 6,7-dimethyl-8-ribityllumazine by condensation of 5-amino-6-(D-ribitylamino)uracil with 3,4-dihydroxy-2-butanone 4-phosphate. This is the penultimate step in the biosynthesis of riboflavin. This chain is 6,7-dimethyl-8-ribityllumazine synthase, found in Proteus mirabilis (strain HI4320).